The chain runs to 393 residues: Formate-dependent phosphoribosylglycinamide formyltransferase (393 aa).

Residues 22-23 (EL) and glutamate 82 contribute to the N(1)-(5-phospho-beta-D-ribosyl)glycinamide site. ATP is bound by residues arginine 114, lysine 155, 160 to 165 (SSGKGQ), 195 to 198 (EGFI), and glutamate 203. An ATP-grasp domain is found at 119-308 (RLAAEELGLP…EFALHARAIL (190 aa)). Glutamate 267 and glutamate 279 together coordinate Mg(2+). N(1)-(5-phospho-beta-D-ribosyl)glycinamide is bound by residues aspartate 286, lysine 356, and 363–364 (RR).

It belongs to the PurK/PurT family. Homodimer.

It carries out the reaction N(1)-(5-phospho-beta-D-ribosyl)glycinamide + formate + ATP = N(2)-formyl-N(1)-(5-phospho-beta-D-ribosyl)glycinamide + ADP + phosphate + H(+). Its pathway is purine metabolism; IMP biosynthesis via de novo pathway; N(2)-formyl-N(1)-(5-phospho-D-ribosyl)glycinamide from N(1)-(5-phospho-D-ribosyl)glycinamide (formate route): step 1/1. Its function is as follows. Involved in the de novo purine biosynthesis. Catalyzes the transfer of formate to 5-phospho-ribosyl-glycinamide (GAR), producing 5-phospho-ribosyl-N-formylglycinamide (FGAR). Formate is provided by PurU via hydrolysis of 10-formyl-tetrahydrofolate. The chain is Formate-dependent phosphoribosylglycinamide formyltransferase from Pseudomonas aeruginosa (strain LESB58).